Here is a 326-residue protein sequence, read N- to C-terminus: tRNA-modifying protein YgfZ (326 aa).

Residues tryptophan 27 and tryptophan 189 each contribute to the folate site.

The protein belongs to the tRNA-modifying YgfZ family.

It is found in the cytoplasm. Functionally, folate-binding protein involved in regulating the level of ATP-DnaA and in the modification of some tRNAs. It is probably a key factor in regulatory networks that act via tRNA modification, such as initiation of chromosomal replication. In Shigella sonnei (strain Ss046), this protein is tRNA-modifying protein YgfZ.